The chain runs to 228 residues: Methyltransferase verB (228 aa).

Belongs to the methyltransferase superfamily.

Its pathway is secondary metabolite biosynthesis; terpenoid biosynthesis. It functions in the pathway mycotoxin biosynthesis. Its function is as follows. Methyltransferase; part of the gene cluster that mediates the biosynthesis of the neurotoxin verrucosidin, a methylated alpha-pyrone polyketide that inhibits oxidative phosphorylation in mitochondria and thereby causes neurological diseases. The carbon backbone of verrucosidin is synthesized by the HR-PKS verA, and further modified by the other verrucodidin cluster enzymes. The sequence is that of Methyltransferase verB from Penicillium polonicum.